We begin with the raw amino-acid sequence, 122 residues long: Large ribosomal subunit protein uL14 (122 aa).

Belongs to the universal ribosomal protein uL14 family. In terms of assembly, part of the 50S ribosomal subunit. Forms a cluster with proteins L3 and L19. In the 70S ribosome, L14 and L19 interact and together make contacts with the 16S rRNA in bridges B5 and B8.

Functionally, binds to 23S rRNA. Forms part of two intersubunit bridges in the 70S ribosome. The protein is Large ribosomal subunit protein uL14 of Christiangramia forsetii (strain DSM 17595 / CGMCC 1.15422 / KT0803) (Gramella forsetii).